The sequence spans 222 residues: Ribonuclease 3 (222 aa).

The region spanning 3-125 (SQSVAKKLNH…LFGAIYLDAG (123 aa)) is the RNase III domain. E38 lines the Mg(2+) pocket. D42 is an active-site residue. Residues D111 and E114 each coordinate Mg(2+). E114 is an active-site residue. In terms of domain architecture, DRBM spans 152-222 (DAKTRLQEWL…AEKALKELLA (71 aa)).

It belongs to the ribonuclease III family. Homodimer. Mg(2+) serves as cofactor.

Its subcellular location is the cytoplasm. It carries out the reaction Endonucleolytic cleavage to 5'-phosphomonoester.. Digests double-stranded RNA. Involved in the processing of primary rRNA transcript to yield the immediate precursors to the large and small rRNAs (23S and 16S). Processes some mRNAs, and tRNAs when they are encoded in the rRNA operon. Processes pre-crRNA and tracrRNA of type II CRISPR loci if present in the organism. The polypeptide is Ribonuclease 3 (Dechloromonas aromatica (strain RCB)).